We begin with the raw amino-acid sequence, 411 residues long: Putative acid phosphatase 10 (411 aa).

The Nucleophile role is filled by H33. The active-site Proton donor is D313. The cysteines at positions 379 and 385 are disulfide-linked.

This sequence belongs to the histidine acid phosphatase family.

It catalyses the reaction a phosphate monoester + H2O = an alcohol + phosphate. In Caenorhabditis elegans, this protein is Putative acid phosphatase 10 (pho-10).